The sequence spans 430 residues: Immunoglobulin heavy constant delta (430 aa).

Residues 1–406 (APTKAPDVFP…FDDVGSLWTT (406 aa)) are Extracellular-facing. Positions 6–98 (PDVFPIISGC…TASKSKKEIF (93 aa)) constitute an Ig-like 1 domain. A disulfide bridge connects residues Cys28 and Cys84. A disordered region spans residues 96–167 (EIFRWPESPK…TPECPSHTQP (72 aa)). Residues 106–118 (AQASSVPTAQPQA) show a composition bias toward polar residues. 2 O-linked (GalNAc...) serine glycosylation sites follow: Ser109 and Ser110. O-linked (GalNAc...) threonine glycans are attached at residues Thr113, Thr126, Thr127, Thr131, and Thr132. Positions 138 to 158 (GGEEKKKEKEKEEQEERETKT) are enriched in basic and acidic residues. 2 consecutive Ig-like domains span residues 175–263 (PAVQ…RLMA) and 267–373 (PAAQ…RSLE). Disulfide bonds link Cys190-Cys249 and Cys294-Cys355. N-linked (GlcNAc...) asparagine glycosylation is found at Asn225, Asn316, and Asn367. A helical transmembrane segment spans residues 407–427 (LSTFVALFILTLLYSGIVTFI). Residues 428–430 (KVK) lie on the Cytoplasmic side of the membrane.

As to quaternary structure, immunoglobulins are composed of two identical heavy chains and two identical light chains; disulfide-linked. An IgD molecule contains thus a delta heavy chain combined with either a kappa or a lambda light chains. Kappa light chains are found predominantly on the membrane IgD (mIgD) form and lambda on the secreted IgD (sIgD) form, this fact is poorly understood. Membrane-bound IgD molecules are non-covalently associated with a heterodimer of CD79A and CD79B.

Its subcellular location is the secreted. It is found in the cell membrane. Functionally, constant region of immunoglobulin heavy chains. Immunoglobulins, also known as antibodies, are membrane-bound or secreted glycoproteins produced by B lymphocytes. In the recognition phase of humoral immunity, the membrane-bound immunoglobulins serve as receptors which, upon binding of a specific antigen, trigger the clonal expansion and differentiation of B lymphocytes into immunoglobulins-secreting plasma cells. Secreted immunoglobulins mediate the effector phase of humoral immunity, which results in the elimination of bound antigens. The antigen binding site is formed by the variable domain of one heavy chain, together with that of its associated light chain. Thus, each immunoglobulin has two antigen binding sites with remarkable affinity for a particular antigen. The variable domains are assembled by a process called V-(D)-J rearrangement and can then be subjected to somatic hypermutations which, after exposure to antigen and selection, allow affinity maturation for a particular antigen. IgD is the major antigen receptor isotype on the surface of most peripheral B-cells, where it is coexpressed with IgM. The membrane-bound IgD (mIgD) induces the phosphorylation of CD79A and CD79B by the Src family of protein tyrosine kinases. Soluble IgD (sIgD) concentration in serum below those of IgG, IgA, and IgM but much higher than that of IgE. IgM and IgD molecules present on B cells have identical V regions and antigen-binding sites. After the antigen binds to the B-cell receptor, the secreted form sIgD is shut off. IgD is a potent inducer of TNF, IL1B, and IL1RN. IgD also induces release of IL6, IL10, and LIF from peripheral blood mononuclear cells. Monocytes seem to be the main producers of cytokines in vitro in the presence of IgD. The chain is Immunoglobulin heavy constant delta from Homo sapiens (Human).